The following is a 327-amino-acid chain: Succinylglutamate desuccinylase (327 aa).

3 residues coordinate Zn(2+): His-53, Glu-56, and His-146. Glu-209 is a catalytic residue.

It belongs to the AspA/AstE family. Succinylglutamate desuccinylase subfamily. Requires Zn(2+) as cofactor.

The catalysed reaction is N-succinyl-L-glutamate + H2O = L-glutamate + succinate. It functions in the pathway amino-acid degradation; L-arginine degradation via AST pathway; L-glutamate and succinate from L-arginine: step 5/5. Transforms N(2)-succinylglutamate into succinate and glutamate. This chain is Succinylglutamate desuccinylase, found in Serratia proteamaculans (strain 568).